The following is an 896-amino-acid chain: DNA mismatch repair protein MutS (896 aa).

ATP is bound at residue 618-625 (GPNMSGKS). Positions 805 to 825 (GKESTKTGKGENKNISHKTES) are enriched in basic and acidic residues. The interval 805–826 (GKESTKTGKGENKNISHKTESD) is disordered.

It belongs to the DNA mismatch repair MutS family.

Its function is as follows. This protein is involved in the repair of mismatches in DNA. It is possible that it carries out the mismatch recognition step. This protein has a weak ATPase activity. The sequence is that of DNA mismatch repair protein MutS from Halothermothrix orenii (strain H 168 / OCM 544 / DSM 9562).